Here is a 345-residue protein sequence, read N- to C-terminus: Serine/threonine-protein kinase US3 homolog (345 aa).

The 286-residue stretch at 49 to 334 folds into the Protein kinase domain; that stretch reads FSVLETFTPG…KALLDFAAFY (286 aa). ATP-binding positions include 55-63 and lysine 78; that span reads FTPGAEGFT. Aspartate 162 serves as the catalytic Proton acceptor.

It belongs to the protein kinase superfamily. Ser/Thr protein kinase family. In terms of processing, phosphorylated by UL13 homolog; this phosphorylation regulates subsequent phosphorylation of UL31 and UL34 homologs by US3. Autophosphorylated.

The protein localises to the host cytoplasm. It is found in the host nucleus. The catalysed reaction is L-seryl-[protein] + ATP = O-phospho-L-seryl-[protein] + ADP + H(+). It carries out the reaction L-threonyl-[protein] + ATP = O-phospho-L-threonyl-[protein] + ADP + H(+). In terms of biological role, multifunctional serine/threonine kinase that plays a role in several processes including egress of virus particles from the nucleus, modulation of the actin cytoskeleton and inhibition of apoptosis. Phosphorylates UL31 and UL34 homologs, two critical regulators of capsid budding from nucleus to endoplasmic reticulum, thereby facilitating virion egress. Modulates and redistributes host components of the nuclear envelope, including LMNA, emerin/EMD and the nuclear matrix protein MATR3. Phosphorylates envelope glycoprotein B (gB), probably to direct it to the cell surface. Promotes virus intracellular spread by restructuring host cell cytoskeleton. Blocks host apoptosis to extend cell survival and allow efficient viral replication. Promotes viral gene expression by phosphorylating host HDAC2 to reduce viral genome silencing. This is Serine/threonine-protein kinase US3 homolog (US2) from Chlorocebus aethiops (Green monkey).